Here is a 525-residue protein sequence, read N- to C-terminus: Light-independent protochlorophyllide reductase subunit B (525 aa).

Position 36 (Asp36) interacts with [4Fe-4S] cluster. Asp290 acts as the Proton donor in catalysis. A substrate-binding site is contributed by 425–426; it reads GL.

This sequence belongs to the ChlB/BchB/BchZ family. In terms of assembly, protochlorophyllide reductase is composed of three subunits; ChlL, ChlN and ChlB. Forms a heterotetramer of two ChlB and two ChlN subunits. The cofactor is [4Fe-4S] cluster.

The enzyme catalyses chlorophyllide a + oxidized 2[4Fe-4S]-[ferredoxin] + 2 ADP + 2 phosphate = protochlorophyllide a + reduced 2[4Fe-4S]-[ferredoxin] + 2 ATP + 2 H2O. It functions in the pathway porphyrin-containing compound metabolism; chlorophyll biosynthesis (light-independent). Component of the dark-operative protochlorophyllide reductase (DPOR) that uses Mg-ATP and reduced ferredoxin to reduce ring D of protochlorophyllide (Pchlide) to form chlorophyllide a (Chlide). This reaction is light-independent. The NB-protein (ChlN-ChlB) is the catalytic component of the complex. The chain is Light-independent protochlorophyllide reductase subunit B from Prochlorococcus marinus (strain MIT 9312).